Reading from the N-terminus, the 907-residue chain is Avirulence protein A (907 aa).

Composition is skewed to polar residues over residues 1-11 (MWNVSKSSNNL) and 124-136 (AGSN…SSDP). 2 disordered regions span residues 1-47 (MWNV…HDQL) and 116-157 (NDDF…KKSY).

This chain is Avirulence protein A (avrA), found in Pseudomonas savastanoi pv. glycinea (Pseudomonas syringae pv. glycinea).